The primary structure comprises 406 residues: 3-phosphoshikimate 1-carboxyvinyltransferase (406 aa).

The 3-phosphoshikimate site is built by lysine 20, serine 21, and arginine 25. Lysine 20 provides a ligand contact to phosphoenolpyruvate. Residues glycine 84 and arginine 112 each coordinate phosphoenolpyruvate. Positions 155, 156, 157, 295, 317, and 321 each coordinate 3-phosphoshikimate. Glutamine 157 provides a ligand contact to phosphoenolpyruvate. Aspartate 295 functions as the Proton acceptor in the catalytic mechanism. The phosphoenolpyruvate site is built by arginine 325, arginine 366, and lysine 392.

Belongs to the EPSP synthase family. As to quaternary structure, monomer.

The protein localises to the cytoplasm. The enzyme catalyses 3-phosphoshikimate + phosphoenolpyruvate = 5-O-(1-carboxyvinyl)-3-phosphoshikimate + phosphate. The protein operates within metabolic intermediate biosynthesis; chorismate biosynthesis. Its function is as follows. Catalyzes the transfer of the enolpyruvyl moiety of phosphoenolpyruvate (PEP) to the 5-hydroxyl of shikimate-3-phosphate (S3P) to produce enolpyruvyl shikimate-3-phosphate and inorganic phosphate. In Pyrococcus furiosus (strain ATCC 43587 / DSM 3638 / JCM 8422 / Vc1), this protein is 3-phosphoshikimate 1-carboxyvinyltransferase.